A 339-amino-acid chain; its full sequence is UDP-N-acetylglucosamine/UDP-N-acetylgalactosamine transporter nstp-4 (339 aa).

8 consecutive transmembrane segments (helical) span residues 44 to 64 (LSSTAVVCAEIIKLITCFFVI), 94 to 114 (LKVAVPAIMYVIQNNLLFFAL), 148 to 168 (YNWMALILLTAGVALVQYPSG), 186 to 206 (ILGLGAVLAACFSSGFAGVYF), 224 to 244 (LAFFSVFGALLVCWLYDWQAI), 255 to 275 (GVIWIVVLLQAYGGLVIALVV), 281 to 301 (ILKGFAVSLSIILSSFTSWLV), and 305 to 325 (LTITTTFAIGATVVIFATFLY).

The protein belongs to the nucleotide-sugar transporter family. SLC35A subfamily. As to expression, widely expressed, including in pharynx and pharyngeal gland cells, seam cells, spermatheca, stomatointestinal muscle, vulva, and body wall muscle.

Its subcellular location is the golgi apparatus membrane. Functionally, uridine diphosphate-N-acetylglucosamine (UDP-GlcNAc) transporter in the Golgi apparatus. UDP-N-acetylgalactosamine (UDP-GalNAc) transporter in the Golgi apparatus. Apparently transports UDP-GlcNAc and UDP-GalNAc simultaneously, and independently, by an unknown mechanism. Functions redundantly with nucleotide sugar transporter srf-3. May be involved in gonadal development. The protein is UDP-N-acetylglucosamine/UDP-N-acetylgalactosamine transporter nstp-4 of Caenorhabditis elegans.